The chain runs to 406 residues: Probable endo-xylogalacturonan hydrolase A (406 aa).

A signal peptide spans 1 to 18 (MISLNSIFLLSLVGLSRA). A disordered region spans residues 20 to 49 (PSRSETSPDRTIKPRAACTPTAGGSSSTDD). 6 PbH1 repeats span residues 183–213 (TSNA…DIGA), 214–235 (STYV…AFKP), 237–257 (ANYV…SVGS), 266–289 (VQNV…KTYP), 299–320 (VKNA…QIQS), and 368–390 (TCDV…ILCG). The active-site Proton donor is D228. N244 carries N-linked (GlcNAc...) asparagine glycosylation. Residue H251 is part of the active site. N273, N278, and N301 each carry an N-linked (GlcNAc...) asparagine glycan.

This sequence belongs to the glycosyl hydrolase 28 family.

The protein resides in the secreted. Functionally, pectinolytic enzyme involved in the degradation of xylogalacturonan (xga), a galacturonan backbone heavily substituted with xylose, and which is one important component of the hairy regions of pectin. Activity requires a galacturonic acid backbone substituted with xylose. The chain is Probable endo-xylogalacturonan hydrolase A (xghA) from Aspergillus oryzae (strain ATCC 42149 / RIB 40) (Yellow koji mold).